A 617-amino-acid polypeptide reads, in one-letter code: Protein 4.1 (617 aa).

One can recognise an FERM domain in the interval 1–282 (MHCKVSLLDD…EHHTFFRLTS (282 aa)). Phosphotyrosine is present on Y13. T169 is modified (phosphothreonine). The interval 308–401 (TRQASALIDR…AEPEPSEAWK (94 aa)) is disordered. S312, S331, and S333 each carry phosphoserine. Low complexity predominate over residues 348–361 (RPTSAPAIAPSPAA). Positions 387–396 (APPEDAEPEP) are enriched in acidic residues. The spectrin--actin-binding stretch occupies residues 401–466 (KKKRERLDGE…WDKRLSTHSP (66 aa)). At Y413 the chain carries Phosphotyrosine; by EGFR. 4 positions are modified to phosphoserine: S417, S427, S437, and S462. A Phosphoserine; by CDK1 modification is found at S465. Residues 467-617 (FRTLNINGQI…VHQETEISEE (151 aa)) are C-terminal (CTD). 2 positions are modified to phosphothreonine: T489 and T612.

Binds with a high affinity to glycophorin and with lower affinity to band III protein. Associates with the nuclear mitotic apparatus. Binds calmodulin, CPAP and DLG1. Also found to associate with contractile apparatus and tight junctions. Interacts with NUMA1; this interaction is negatively regulated by CDK1 during metaphase and promotes anaphase-specific localization of NUMA1 in symmetrically dividing cells. Interacts with ATP2B1; regulates small intestinal calcium absorption through regulation of membrane expression of ATP2B1. In terms of processing, phosphorylated at multiple sites by different protein kinases and each phosphorylation event selectively modulates the protein's functions. Phosphorylation on Tyr-413 reduces the ability of 4.1 to promote the assembly of the spectrin/actin/4.1 ternary complex.

It is found in the nucleus. It localises to the cytoplasm. Its subcellular location is the cytoskeleton. The protein resides in the cell cortex. In terms of biological role, protein 4.1 is a major structural element of the erythrocyte membrane skeleton. It plays a key role in regulating membrane physical properties of mechanical stability and deformability by stabilizing spectrin-actin interaction. Recruits DLG1 to membranes. Required for dynein-dynactin complex and NUMA1 recruitment at the mitotic cell cortex during anaphase. The polypeptide is Protein 4.1 (Bos taurus (Bovine)).